Reading from the N-terminus, the 188-residue chain is Holliday junction branch migration complex subunit RuvA (188 aa).

A domain I region spans residues 1–64; that stretch reads MIAGISGRVL…QDGITLYGFS (64 aa). The domain II stretch occupies residues 65–143; that stretch reads NERKKELFLS…SAGIKDMRIY (79 aa). Position 143 (tyrosine 143) is a region of interest, flexible linker. A domain III region spans residues 143 to 188; that stretch reads YHESLEALISLGYPEKQAREAVKHVYREGMKTSELIKEALKFLSQR.

It belongs to the RuvA family. In terms of assembly, homotetramer. Forms an RuvA(8)-RuvB(12)-Holliday junction (HJ) complex. HJ DNA is sandwiched between 2 RuvA tetramers; dsDNA enters through RuvA and exits via RuvB. An RuvB hexamer assembles on each DNA strand where it exits the tetramer. Each RuvB hexamer is contacted by two RuvA subunits (via domain III) on 2 adjacent RuvB subunits; this complex drives branch migration. In the full resolvosome a probable DNA-RuvA(4)-RuvB(12)-RuvC(2) complex forms which resolves the HJ.

It localises to the cytoplasm. In terms of biological role, the RuvA-RuvB-RuvC complex processes Holliday junction (HJ) DNA during genetic recombination and DNA repair, while the RuvA-RuvB complex plays an important role in the rescue of blocked DNA replication forks via replication fork reversal (RFR). RuvA specifically binds to HJ cruciform DNA, conferring on it an open structure. The RuvB hexamer acts as an ATP-dependent pump, pulling dsDNA into and through the RuvAB complex. HJ branch migration allows RuvC to scan DNA until it finds its consensus sequence, where it cleaves and resolves the cruciform DNA. The chain is Holliday junction branch migration complex subunit RuvA from Thermotoga petrophila (strain ATCC BAA-488 / DSM 13995 / JCM 10881 / RKU-1).